Here is a 419-residue protein sequence, read N- to C-terminus: L-rhamnose isomerase (419 aa).

Residues H262, D294, and D296 each coordinate Mn(2+).

Belongs to the rhamnose isomerase family. In terms of assembly, homotetramer. Mn(2+) serves as cofactor.

The protein localises to the cytoplasm. The enzyme catalyses L-rhamnopyranose = L-rhamnulose. It functions in the pathway carbohydrate degradation; L-rhamnose degradation; glycerone phosphate from L-rhamnose: step 1/3. Catalyzes the interconversion of L-rhamnose and L-rhamnulose. The sequence is that of L-rhamnose isomerase from Salmonella typhimurium (strain LT2 / SGSC1412 / ATCC 700720).